We begin with the raw amino-acid sequence, 438 residues long: Exodeoxyribonuclease 7 large subunit (438 aa).

The disordered stretch occupies residues 405–438 (GATSTGPTDDIPSSAARLPSSPAPDARPASGAES).

Belongs to the XseA family. As to quaternary structure, heterooligomer composed of large and small subunits.

The protein localises to the cytoplasm. It carries out the reaction Exonucleolytic cleavage in either 5'- to 3'- or 3'- to 5'-direction to yield nucleoside 5'-phosphates.. Bidirectionally degrades single-stranded DNA into large acid-insoluble oligonucleotides, which are then degraded further into small acid-soluble oligonucleotides. The protein is Exodeoxyribonuclease 7 large subunit of Clavibacter michiganensis subsp. michiganensis (strain NCPPB 382).